The sequence spans 179 residues: Peptide deformylase 2 (179 aa).

Positions 101 and 143 each coordinate Fe cation. E144 is a catalytic residue. Residue H147 participates in Fe cation binding.

It belongs to the polypeptide deformylase family. Fe(2+) serves as cofactor.

It catalyses the reaction N-terminal N-formyl-L-methionyl-[peptide] + H2O = N-terminal L-methionyl-[peptide] + formate. Functionally, removes the formyl group from the N-terminal Met of newly synthesized proteins. Requires at least a dipeptide for an efficient rate of reaction. N-terminal L-methionine is a prerequisite for activity but the enzyme has broad specificity at other positions. This chain is Peptide deformylase 2, found in Pseudomonas syringae pv. tomato (strain ATCC BAA-871 / DC3000).